A 264-amino-acid polypeptide reads, in one-letter code: Thymidylate synthase (264 aa).

DUMP is bound at residue R21. A (6R)-5,10-methylene-5,6,7,8-tetrahydrofolate-binding site is contributed by H51. Residue 126 to 127 (RR) coordinates dUMP. The active-site Nucleophile is the C146. Residues 166-169 (RSGD), N177, and 207-209 (HLY) contribute to the dUMP site. D169 contributes to the (6R)-5,10-methylene-5,6,7,8-tetrahydrofolate binding site. A263 serves as a coordination point for (6R)-5,10-methylene-5,6,7,8-tetrahydrofolate.

It belongs to the thymidylate synthase family. Bacterial-type ThyA subfamily. Homodimer.

It is found in the cytoplasm. The enzyme catalyses dUMP + (6R)-5,10-methylene-5,6,7,8-tetrahydrofolate = 7,8-dihydrofolate + dTMP. It functions in the pathway pyrimidine metabolism; dTTP biosynthesis. Catalyzes the reductive methylation of 2'-deoxyuridine-5'-monophosphate (dUMP) to 2'-deoxythymidine-5'-monophosphate (dTMP) while utilizing 5,10-methylenetetrahydrofolate (mTHF) as the methyl donor and reductant in the reaction, yielding dihydrofolate (DHF) as a by-product. This enzymatic reaction provides an intracellular de novo source of dTMP, an essential precursor for DNA biosynthesis. In Xanthomonas campestris pv. campestris (strain 8004), this protein is Thymidylate synthase.